The sequence spans 130 residues: Small ribosomal subunit protein uS11 (130 aa).

It belongs to the universal ribosomal protein uS11 family. Part of the 30S ribosomal subunit. Interacts with proteins S7 and S18. Binds to IF-3.

Its function is as follows. Located on the platform of the 30S subunit, it bridges several disparate RNA helices of the 16S rRNA. Forms part of the Shine-Dalgarno cleft in the 70S ribosome. The chain is Small ribosomal subunit protein uS11 from Xylella fastidiosa (strain 9a5c).